The following is a 237-amino-acid chain: MRPSRRAPDELRAVSLERGVVKYAEGSCLVKFGDTHVLVTATLEERLPPWLKGQGRGWVTAEYGMLPRATLERTRREASAGKQNGRTVEIQRLIGRSLRTIVDLEALGERQITVDCDVLQADGGTRTASITGAWVALADCLNWMKARNMIKGQVLRDNVAAISCGIYNGTPVLDLDYAEDSEAETDANFVMTGDGRLVEVQGTAERTPFSQDEFLQLMALAQKGVARLVDLQKMAVG.

Residues arginine 86 and 124-126 (GTR) each bind phosphate.

It belongs to the RNase PH family. Homohexameric ring arranged as a trimer of dimers.

The catalysed reaction is tRNA(n+1) + phosphate = tRNA(n) + a ribonucleoside 5'-diphosphate. Phosphorolytic 3'-5' exoribonuclease that plays an important role in tRNA 3'-end maturation. Removes nucleotide residues following the 3'-CCA terminus of tRNAs; can also add nucleotides to the ends of RNA molecules by using nucleoside diphosphates as substrates, but this may not be physiologically important. Probably plays a role in initiation of 16S rRNA degradation (leading to ribosome degradation) during starvation. The polypeptide is Ribonuclease PH (Rhodopseudomonas palustris (strain ATCC BAA-98 / CGA009)).